A 910-amino-acid chain; its full sequence is Ubiquitin carboxyl-terminal hydrolase 9 (910 aa).

The 116-residue stretch at Thr-19–Ile-134 folds into the DUSP domain. The disordered stretch occupies residues Ile-68–Ser-89. In terms of domain architecture, USP spans Ala-303–Val-894. Residue Cys-312 is the Nucleophile of the active site. His-852 (proton acceptor) is an active-site residue.

This sequence belongs to the peptidase C19 family.

The enzyme catalyses Thiol-dependent hydrolysis of ester, thioester, amide, peptide and isopeptide bonds formed by the C-terminal Gly of ubiquitin (a 76-residue protein attached to proteins as an intracellular targeting signal).. Recognizes and hydrolyzes the peptide bond at the C-terminal Gly of ubiquitin. Involved in the processing of poly-ubiquitin precursors as well as that of ubiquitinated proteins. This Arabidopsis thaliana (Mouse-ear cress) protein is Ubiquitin carboxyl-terminal hydrolase 9 (UBP9).